The sequence spans 81 residues: Centromere protein X (81 aa).

M1 is subject to N-acetylmethionine.

Belongs to the CENP-X/MHF2 family. As to quaternary structure, heterodimer with CENPX, sometimes called MHF; this interaction stabilizes both partners. MHF heterodimers can assemble to form tetrameric structures. MHF also coassemble with CENPT-CENPW heterodimers at centromeres to form the tetrameric CENP-T-W-S-X complex. Forms a discrete complex with FANCM and CENPX, called FANCM-MHF; this interaction, probably mediated by direct binding between CENPS and FANCM, leads to synergistic activation of double-stranded DNA binding and strongly stimulates FANCM-mediated DNA remodeling. Recruited by FANCM to the Fanconi anemia (FA) core complex, which consists of CENPS, CENPX, FANCA, FANCB, FANCC, FANCE, FANCF, FANCG, FANCL, FANCM, FAAP24 and FAAP100. The FA core complex associates with Bloom syndrome (BLM) complex, which consists of at least BLM, DNA topoisomerase 3-alpha (TOP3A), RMI1/BLAP75, RPA1/RPA70 and RPA2/RPA32. The super complex between FA and BLM is called BRAFT.

The protein resides in the nucleus. Its subcellular location is the chromosome. The protein localises to the centromere. It is found in the kinetochore. In terms of biological role, DNA-binding component of the Fanconi anemia (FA) core complex. Required for the normal activation of the FA pathway, leading to monoubiquitination of the FANCI-FANCD2 complex in response to DNA damage, cellular resistance to DNA cross-linking drugs, and prevention of chromosomal breakage. In complex with CENPS (MHF heterodimer), crucial cofactor for FANCM in both binding and ATP-dependent remodeling of DNA. Stabilizes FANCM. In complex with CENPS and FANCM (but not other FANC proteins), rapidly recruited to blocked forks and promotes gene conversion at blocked replication forks. In complex with CENPS, CENPT and CENPW (CENP-T-W-S-X heterotetramer), involved in the formation of a functional kinetochore outer plate, which is essential for kinetochore-microtubule attachment and faithful mitotic progression. As a component of MHF and CENP-T-W-S-X complexes, binds DNA and bends it to form a nucleosome-like structure. DNA-binding function is fulfilled in the presence of CENPS, with the following preference for DNA substates: Holliday junction &gt; double-stranded &gt; splay arm &gt; single-stranded. Does not bind DNA on its own. The protein is Centromere protein X (CENPX) of Pongo abelii (Sumatran orangutan).